The chain runs to 328 residues: 6-phosphogluconolactonase (328 aa).

The protein belongs to the cycloisomerase 2 family.

It carries out the reaction 6-phospho-D-glucono-1,5-lactone + H2O = 6-phospho-D-gluconate + H(+). The protein operates within carbohydrate degradation; pentose phosphate pathway; D-ribulose 5-phosphate from D-glucose 6-phosphate (oxidative stage): step 2/3. Catalyzes the hydrolysis of 6-phosphogluconolactone to 6-phosphogluconate. This Photorhabdus laumondii subsp. laumondii (strain DSM 15139 / CIP 105565 / TT01) (Photorhabdus luminescens subsp. laumondii) protein is 6-phosphogluconolactonase.